Here is a 678-residue protein sequence, read N- to C-terminus: MPPGRPEVYQERFDIVQPHCSSEHTISLNTDFSKAAFGSATGLVAKAASQTTTAIWNLHADAHDFSNSSYLSKQVFAANLAHIGVAFIWLSGMHFHGAYFSNYLDWLQDPSIAPTAQQVSNIANQSVLNPIRVTSGFFNLWLAEGITSTYQLKVIAAFGLIASALCFLGSYFHMHSSTSFTRVLNTKLTSLSTHHLVGLLGLGSLAWAGHLIHISLPVNILMNAGVAVPSPHSLLSSKAVATIVEQLSFSALTSSDGYVWQPLVYSAMHHFALALVLIVGSVLGPLSTASNPLMSFTVGSSWHLVLGVQLFVTGTASVLYAQMSNAYPVYPYLLTDHPTVVSLFVHHMWIGGFFLVGAFAHLSIGLVRDTLPQSFSVVLTQRDIILGHLTWVVAFLGVHSFGLYVHNDTMQALGRPDDMFSDNAISLLPVFARWSTLTLNSTGSAVSVLGVELSTADFMVTHIHAFTIHTTVLILVKGFLYARSSRLVNDKYKLDFRYPCDGPGRGGTCQISPWDHVFLGLFWMYNSISVVIFHFFWEYQSNLASIKASAGGSIRALASDFELNSINTNGWLRNFLWSGAAQVIQSYGSPLAAYGLTFPASHFVWALSLMFLFSGRGYWQELIESVLWAHHKLYVVPHIQPRALSITSGRAVGFTHYLLGGIGSTWSFFLARIVATAG.

The next 8 helical transmembrane spans lie at 75 to 98 (VFAA…FHGA), 152 to 175 (LKVI…FHMH), 192 to 216 (STHH…HISL), 266 to 284 (SAMH…SVLG), 302 to 325 (WHLV…QMSN), 341 to 367 (VSLF…IGLV), 384 to 406 (IILG…LYVH), and 458 to 476 (FMVT…LILV). 2 residues coordinate [4Fe-4S] cluster: Cys-500 and Cys-509. A run of 2 helical transmembrane segments spans residues 516 to 537 (HVFL…HFFW) and 591 to 613 (LAAY…MFLF). Position 602 (His-602) interacts with chlorophyll a'. Residues Met-610 and Tyr-618 each contribute to the chlorophyll a site. Trp-619 is a binding site for phylloquinone. A helical transmembrane segment spans residues 651 to 671 (AVGFTHYLLGGIGSTWSFFLA).

It belongs to the PsaA/PsaB family. In terms of assembly, the PsaA/B heterodimer binds the P700 chlorophyll special pair and subsequent electron acceptors. PSI consists of a core antenna complex that captures photons, and an electron transfer chain that converts photonic excitation into a charge separation. The eukaryotic PSI reaction center is composed of at least 11 subunits. It depends on P700 is a chlorophyll a/chlorophyll a' dimer, A0 is one or more chlorophyll a, A1 is one or both phylloquinones and FX is a shared 4Fe-4S iron-sulfur center. as a cofactor.

The protein localises to the plastid. It localises to the chloroplast thylakoid membrane. It catalyses the reaction reduced [plastocyanin] + hnu + oxidized [2Fe-2S]-[ferredoxin] = oxidized [plastocyanin] + reduced [2Fe-2S]-[ferredoxin]. PsaA and PsaB bind P700, the primary electron donor of photosystem I (PSI), as well as the electron acceptors A0, A1 and FX. PSI is a plastocyanin/cytochrome c6-ferredoxin oxidoreductase, converting photonic excitation into a charge separation, which transfers an electron from the donor P700 chlorophyll pair to the spectroscopically characterized acceptors A0, A1, FX, FA and FB in turn. Oxidized P700 is reduced on the lumenal side of the thylakoid membrane by plastocyanin or cytochrome c6. The sequence is that of Photosystem I P700 chlorophyll a apoprotein A1 from Amphidinium carterae (Dinoflagellate).